The chain runs to 95 residues: Small ribosomal subunit protein bS18 (95 aa).

It belongs to the bacterial ribosomal protein bS18 family. As to quaternary structure, part of the 30S ribosomal subunit. Forms a tight heterodimer with protein bS6.

Binds as a heterodimer with protein bS6 to the central domain of the 16S rRNA, where it helps stabilize the platform of the 30S subunit. The chain is Small ribosomal subunit protein bS18 from Ehrlichia ruminantium (strain Gardel).